A 292-amino-acid polypeptide reads, in one-letter code: Protease HtpX (292 aa).

The next 2 helical transmembrane spans lie at 4–24 (IVLF…ILFL) and 32–52 (IYGL…LSLI). A Zn(2+)-binding site is contributed by His139. The active site involves Glu140. His143 serves as a coordination point for Zn(2+). Helical transmembrane passes span 147 to 167 (GDMI…IFIS) and 193 to 213 (FVYF…ASII). Residue Glu222 coordinates Zn(2+).

Belongs to the peptidase M48B family. Zn(2+) serves as cofactor.

It localises to the cell membrane. The sequence is that of Protease HtpX from Buchnera aphidicola subsp. Acyrthosiphon pisum (strain 5A).